Here is a 72-residue protein sequence, read N- to C-terminus: Putative snRNP Sm-like protein (72 aa).

Positions 4–72 (RPLDILNDAL…RGDNVVYVSP (69 aa)) constitute a Sm domain.

Belongs to the snRNP Sm proteins family.

This is Putative snRNP Sm-like protein from Methanococcoides burtonii (strain DSM 6242 / NBRC 107633 / OCM 468 / ACE-M).